Reading from the N-terminus, the 347-residue chain is Spermatogenesis associated 6-like protein (347 aa).

The disordered stretch occupies residues 115-199 (SKSHGQRVQA…ENNLEHCSKK (85 aa)). Residues 116–125 (KSHGQRVQAT) are compositionally biased toward polar residues. Basic residues predominate over residues 153–166 (LHLHRPTQRNHGKS). Residues 170 to 183 (PGERKPPFVVRHVD) are compositionally biased toward basic and acidic residues. A phosphoserine mark is found at Ser-218 and Ser-221. Residues 234–285 (ERIVLKSQPPPPVDSSESRKPSLSHQGDASLHTETSVTTSQLSRPPSPLNQP) form a disordered region. Positions 254 to 277 (PSLSHQGDASLHTETSVTTSQLSR) are enriched in polar residues.

This sequence belongs to the SPATA6 family.

The polypeptide is Spermatogenesis associated 6-like protein (Spata6l) (Mus musculus (Mouse)).